Here is a 212-residue protein sequence, read N- to C-terminus: Probable nicotinate-nucleotide adenylyltransferase (212 aa).

The protein belongs to the NadD family.

It catalyses the reaction nicotinate beta-D-ribonucleotide + ATP + H(+) = deamido-NAD(+) + diphosphate. Its pathway is cofactor biosynthesis; NAD(+) biosynthesis; deamido-NAD(+) from nicotinate D-ribonucleotide: step 1/1. Functionally, catalyzes the reversible adenylation of nicotinate mononucleotide (NaMN) to nicotinic acid adenine dinucleotide (NaAD). The protein is Probable nicotinate-nucleotide adenylyltransferase of Mycobacterium avium (strain 104).